Consider the following 379-residue polypeptide: Cytochrome b (379 aa).

Helical transmembrane passes span 33-53 (FGSL…FLDM), 77-98 (WLIR…YLHI), 113-133 (WNIG…GYVL), and 178-198 (FFAF…VHLL). Positions 83 and 97 each coordinate heme b. Heme b contacts are provided by His182 and His196. His201 serves as a coordination point for a ubiquinone. 4 consecutive transmembrane segments (helical) span residues 226 to 246 (TKDF…VPFF), 288 to 308 (LGGV…PHIQ), 320 to 340 (ISQF…WIGG), and 347 to 367 (FIII…VLMP).

Belongs to the cytochrome b family. In terms of assembly, the cytochrome bc1 complex contains 11 subunits: 3 respiratory subunits (MT-CYB, CYC1 and UQCRFS1), 2 core proteins (UQCRC1 and UQCRC2) and 6 low-molecular weight proteins (UQCRH/QCR6, UQCRB/QCR7, UQCRQ/QCR8, UQCR10/QCR9, UQCR11/QCR10 and a cleavage product of UQCRFS1). This cytochrome bc1 complex then forms a dimer. The cofactor is heme b.

It localises to the mitochondrion inner membrane. Its function is as follows. Component of the ubiquinol-cytochrome c reductase complex (complex III or cytochrome b-c1 complex) that is part of the mitochondrial respiratory chain. The b-c1 complex mediates electron transfer from ubiquinol to cytochrome c. Contributes to the generation of a proton gradient across the mitochondrial membrane that is then used for ATP synthesis. The polypeptide is Cytochrome b (MT-CYB) (Dipodomys nelsoni (Nelson's kangaroo rat)).